The primary structure comprises 228 residues: Urease accessory protein UreF (228 aa).

Belongs to the UreF family. In terms of assembly, ureD, UreF and UreG form a complex that acts as a GTP-hydrolysis-dependent molecular chaperone, activating the urease apoprotein by helping to assemble the nickel containing metallocenter of UreC. The UreE protein probably delivers the nickel.

It localises to the cytoplasm. Its function is as follows. Required for maturation of urease via the functional incorporation of the urease nickel metallocenter. This chain is Urease accessory protein UreF, found in Yersinia pseudotuberculosis serotype IB (strain PB1/+).